Here is a 91-residue protein sequence, read N- to C-terminus: MIPRVFILLTLVALFCACSTLAAVSHIEVDCIPAFTVYLLYGFVTLTLICSLITVVIAFIQCIDWVCVRFAYLRHHPQYRDRTIAELLRIL.

The first 22 residues, 1–22, serve as a signal peptide directing secretion; that stretch reads MIPRVFILLTLVALFCACSTLA. Topologically, residues 23-34 are lumenal; the sequence is AVSHIEVDCIPA. Residues 35–60 form a helical membrane-spanning segment; that stretch reads FTVYLLYGFVTLTLICSLITVVIAFI. Topologically, residues 61–91 are cytoplasmic; it reads QCIDWVCVRFAYLRHHPQYRDRTIAELLRIL.

The protein belongs to the adenoviridae E3B family.

It localises to the host endoplasmic reticulum membrane. Its function is as follows. Down-regulates the EGF receptor. In Homo sapiens (Human), this protein is Early E3B 10.4 kDa protein.